The sequence spans 384 residues: Queuine tRNA-ribosyltransferase (384 aa).

The active-site Proton acceptor is Asp93. Substrate contacts are provided by residues 93 to 97, Asp147, Gln202, and Gly229; that span reads DSGGF. The tract at residues 260 to 266 is RNA binding; the sequence is GVGYPEE. The Nucleophile role is filled by Asp279. An RNA binding; important for wobble base 34 recognition region spans residues 284–288; the sequence is TRAAR. Positions 317, 319, 322, and 348 each coordinate Zn(2+).

This sequence belongs to the queuine tRNA-ribosyltransferase family. As to quaternary structure, homodimer. Within each dimer, one monomer is responsible for RNA recognition and catalysis, while the other monomer binds to the replacement base PreQ1. Requires Zn(2+) as cofactor.

The catalysed reaction is 7-aminomethyl-7-carbaguanine + guanosine(34) in tRNA = 7-aminomethyl-7-carbaguanosine(34) in tRNA + guanine. The protein operates within tRNA modification; tRNA-queuosine biosynthesis. In terms of biological role, catalyzes the base-exchange of a guanine (G) residue with the queuine precursor 7-aminomethyl-7-deazaguanine (PreQ1) at position 34 (anticodon wobble position) in tRNAs with GU(N) anticodons (tRNA-Asp, -Asn, -His and -Tyr). Catalysis occurs through a double-displacement mechanism. The nucleophile active site attacks the C1' of nucleotide 34 to detach the guanine base from the RNA, forming a covalent enzyme-RNA intermediate. The proton acceptor active site deprotonates the incoming PreQ1, allowing a nucleophilic attack on the C1' of the ribose to form the product. After dissociation, two additional enzymatic reactions on the tRNA convert PreQ1 to queuine (Q), resulting in the hypermodified nucleoside queuosine (7-(((4,5-cis-dihydroxy-2-cyclopenten-1-yl)amino)methyl)-7-deazaguanosine). The polypeptide is Queuine tRNA-ribosyltransferase (Koribacter versatilis (strain Ellin345)).